We begin with the raw amino-acid sequence, 331 residues long: Phosphoribosylformylglycinamidine cyclo-ligase (331 aa).

It belongs to the AIR synthase family.

The protein resides in the cytoplasm. The enzyme catalyses 2-formamido-N(1)-(5-O-phospho-beta-D-ribosyl)acetamidine + ATP = 5-amino-1-(5-phospho-beta-D-ribosyl)imidazole + ADP + phosphate + H(+). Its pathway is purine metabolism; IMP biosynthesis via de novo pathway; 5-amino-1-(5-phospho-D-ribosyl)imidazole from N(2)-formyl-N(1)-(5-phospho-D-ribosyl)glycinamide: step 2/2. In Clostridium kluyveri (strain NBRC 12016), this protein is Phosphoribosylformylglycinamidine cyclo-ligase.